A 310-amino-acid polypeptide reads, in one-letter code: Ribosomal RNA small subunit methyltransferase H (310 aa).

S-adenosyl-L-methionine-binding positions include 33-35, Asp52, Phe79, Asp98, and Gln105; that span reads GGH.

This sequence belongs to the methyltransferase superfamily. RsmH family.

Its subcellular location is the cytoplasm. The catalysed reaction is cytidine(1402) in 16S rRNA + S-adenosyl-L-methionine = N(4)-methylcytidine(1402) in 16S rRNA + S-adenosyl-L-homocysteine + H(+). Its function is as follows. Specifically methylates the N4 position of cytidine in position 1402 (C1402) of 16S rRNA. This chain is Ribosomal RNA small subunit methyltransferase H, found in Campylobacter jejuni (strain RM1221).